The primary structure comprises 425 residues: Serine--tRNA ligase (425 aa).

229-231 is a binding site for L-serine; that stretch reads TAE. Residue 260 to 262 participates in ATP binding; it reads RSE. Glu-283 is a binding site for L-serine. Position 347–350 (347–350) interacts with ATP; the sequence is EISS. An L-serine-binding site is contributed by Ser-384.

This sequence belongs to the class-II aminoacyl-tRNA synthetase family. Type-1 seryl-tRNA synthetase subfamily. As to quaternary structure, homodimer. The tRNA molecule binds across the dimer.

Its subcellular location is the cytoplasm. The catalysed reaction is tRNA(Ser) + L-serine + ATP = L-seryl-tRNA(Ser) + AMP + diphosphate + H(+). The enzyme catalyses tRNA(Sec) + L-serine + ATP = L-seryl-tRNA(Sec) + AMP + diphosphate + H(+). It participates in aminoacyl-tRNA biosynthesis; selenocysteinyl-tRNA(Sec) biosynthesis; L-seryl-tRNA(Sec) from L-serine and tRNA(Sec): step 1/1. Functionally, catalyzes the attachment of serine to tRNA(Ser). Is also able to aminoacylate tRNA(Sec) with serine, to form the misacylated tRNA L-seryl-tRNA(Sec), which will be further converted into selenocysteinyl-tRNA(Sec). The protein is Serine--tRNA ligase of Rhizorhabdus wittichii (strain DSM 6014 / CCUG 31198 / JCM 15750 / NBRC 105917 / EY 4224 / RW1) (Sphingomonas wittichii).